Consider the following 470-residue polypeptide: 3-isopropylmalate dehydratase large subunit (470 aa).

Residues Cys349, Cys410, and Cys413 each contribute to the [4Fe-4S] cluster site.

It belongs to the aconitase/IPM isomerase family. LeuC type 1 subfamily. In terms of assembly, heterodimer of LeuC and LeuD. [4Fe-4S] cluster serves as cofactor.

It catalyses the reaction (2R,3S)-3-isopropylmalate = (2S)-2-isopropylmalate. It functions in the pathway amino-acid biosynthesis; L-leucine biosynthesis; L-leucine from 3-methyl-2-oxobutanoate: step 2/4. In terms of biological role, catalyzes the isomerization between 2-isopropylmalate and 3-isopropylmalate, via the formation of 2-isopropylmaleate. The sequence is that of 3-isopropylmalate dehydratase large subunit from Nitrosomonas europaea (strain ATCC 19718 / CIP 103999 / KCTC 2705 / NBRC 14298).